Here is a 240-residue protein sequence, read N- to C-terminus: Phosphoribosylaminoimidazole-succinocarboxamide synthase (240 aa).

The protein belongs to the SAICAR synthetase family.

The catalysed reaction is 5-amino-1-(5-phospho-D-ribosyl)imidazole-4-carboxylate + L-aspartate + ATP = (2S)-2-[5-amino-1-(5-phospho-beta-D-ribosyl)imidazole-4-carboxamido]succinate + ADP + phosphate + 2 H(+). It participates in purine metabolism; IMP biosynthesis via de novo pathway; 5-amino-1-(5-phospho-D-ribosyl)imidazole-4-carboxamide from 5-amino-1-(5-phospho-D-ribosyl)imidazole-4-carboxylate: step 1/2. This is Phosphoribosylaminoimidazole-succinocarboxamide synthase from Coxiella burnetii (strain RSA 493 / Nine Mile phase I).